A 328-amino-acid polypeptide reads, in one-letter code: Tyrosine recombinase XerC (328 aa).

The Core-binding (CB) domain maps to 13–100; it reads QAPHPQIAAY…AWRGWFKWMA (88 aa). The region spanning 122 to 319 is the Tyr recombinase domain; sequence RLPKALSVEQ…DFQHLAKIYD (198 aa). Active-site residues include arginine 162, lysine 197, histidine 271, arginine 274, and histidine 297. The O-(3'-phospho-DNA)-tyrosine intermediate role is filled by tyrosine 306.

It belongs to the 'phage' integrase family. XerC subfamily. Forms a cyclic heterotetrameric complex composed of two molecules of XerC and two molecules of XerD.

Its subcellular location is the cytoplasm. Functionally, site-specific tyrosine recombinase, which acts by catalyzing the cutting and rejoining of the recombining DNA molecules. The XerC-XerD complex is essential to convert dimers of the bacterial chromosome into monomers to permit their segregation at cell division. It also contributes to the segregational stability of plasmids. This is Tyrosine recombinase XerC from Ralstonia pickettii (strain 12J).